Reading from the N-terminus, the 172-residue chain is Phosphopantetheine adenylyltransferase (172 aa).

S9 contributes to the substrate binding site. Residues 9-10 (SF) and H17 each bind ATP. Residues K41, L78, and R92 each coordinate substrate. ATP is bound by residues 93 to 95 (GLR), E103, and 128 to 134 (GRAITST).

Belongs to the bacterial CoaD family. Homohexamer. Requires Mg(2+) as cofactor.

The protein resides in the cytoplasm. The catalysed reaction is (R)-4'-phosphopantetheine + ATP + H(+) = 3'-dephospho-CoA + diphosphate. Its pathway is cofactor biosynthesis; coenzyme A biosynthesis; CoA from (R)-pantothenate: step 4/5. In terms of biological role, reversibly transfers an adenylyl group from ATP to 4'-phosphopantetheine, yielding dephospho-CoA (dPCoA) and pyrophosphate. This Bartonella quintana (strain Toulouse) (Rochalimaea quintana) protein is Phosphopantetheine adenylyltransferase.